Here is a 408-residue protein sequence, read N- to C-terminus: Formate-dependent phosphoribosylglycinamide formyltransferase (408 aa).

N(1)-(5-phospho-beta-D-ribosyl)glycinamide-binding positions include 25 to 26 (EL) and glutamate 85. Residues arginine 118, lysine 159, 164–169 (SSGKGQ), 199–202 (EAFV), and glutamate 207 contribute to the ATP site. Residues 123 to 318 (KLAAEELGLP…EFELHAKAIL (196 aa)) enclose the ATP-grasp domain. 2 residues coordinate Mg(2+): glutamate 277 and glutamate 289. N(1)-(5-phospho-beta-D-ribosyl)glycinamide is bound by residues aspartate 296, lysine 365, and 372 to 373 (RR).

Belongs to the PurK/PurT family. Homodimer.

The catalysed reaction is N(1)-(5-phospho-beta-D-ribosyl)glycinamide + formate + ATP = N(2)-formyl-N(1)-(5-phospho-beta-D-ribosyl)glycinamide + ADP + phosphate + H(+). It participates in purine metabolism; IMP biosynthesis via de novo pathway; N(2)-formyl-N(1)-(5-phospho-D-ribosyl)glycinamide from N(1)-(5-phospho-D-ribosyl)glycinamide (formate route): step 1/1. Its function is as follows. Involved in the de novo purine biosynthesis. Catalyzes the transfer of formate to 5-phospho-ribosyl-glycinamide (GAR), producing 5-phospho-ribosyl-N-formylglycinamide (FGAR). Formate is provided by PurU via hydrolysis of 10-formyl-tetrahydrofolate. This Corynebacterium glutamicum (strain R) protein is Formate-dependent phosphoribosylglycinamide formyltransferase.